A 260-amino-acid polypeptide reads, in one-letter code: Proansamycin X synthase (260 aa).

The Acyl-thioester intermediate role is filled by Cys73. Catalysis depends on residues His111 and Asp126.

It belongs to the arylamine N-acetyltransferase family.

Its pathway is antibiotic biosynthesis; rifamycin B biosynthesis. Catalyzes the release of the completed linear polyketide from the rif PKS by forming an intramolecular amide bond, in this way terminating polyketide assembly and forming the macrocyclic compound proansamycin X, an intermediate in the rifamycin B biosynthesis. This is Proansamycin X synthase (rifF) from Amycolatopsis mediterranei (strain S699) (Nocardia mediterranei).